The primary structure comprises 253 residues: Triosephosphate isomerase, cytosolic (253 aa).

Residues Asn10 and Lys12 each coordinate substrate. The Electrophile role is filled by His96. Glu166 (proton acceptor) is an active-site residue.

It belongs to the triosephosphate isomerase family. Homodimer.

The protein localises to the cytoplasm. It catalyses the reaction D-glyceraldehyde 3-phosphate = dihydroxyacetone phosphate. It participates in carbohydrate biosynthesis; gluconeogenesis. The protein operates within carbohydrate degradation; glycolysis; D-glyceraldehyde 3-phosphate from glycerone phosphate: step 1/1. The sequence is that of Triosephosphate isomerase, cytosolic from Secale cereale (Rye).